We begin with the raw amino-acid sequence, 216 residues long: Flagellin B3 (216 aa).

The propeptide occupies 1–11 (MLLDYIKSRRG).

Belongs to the archaeal flagellin family.

It localises to the archaeal flagellum. Flagellin is the subunit protein which polymerizes to form the filaments of archaeal flagella. The polypeptide is Flagellin B3 (flaB3) (Methanocaldococcus jannaschii (strain ATCC 43067 / DSM 2661 / JAL-1 / JCM 10045 / NBRC 100440) (Methanococcus jannaschii)).